A 344-amino-acid chain; its full sequence is Sulfate/thiosulfate import ATP-binding protein CysA (344 aa).

The ABC transporter domain occupies 3 to 233 (ILIDNVSKNF…PESAFVMSFL (231 aa)). 35–42 (GPSGCGKS) contributes to the ATP binding site.

Belongs to the ABC transporter superfamily. Sulfate/tungstate importer (TC 3.A.1.6) family. The complex is composed of two ATP-binding proteins (CysA), two transmembrane proteins (CysT and CysW) and a solute-binding protein (CysP).

It localises to the cell inner membrane. It carries out the reaction sulfate(out) + ATP + H2O = sulfate(in) + ADP + phosphate + H(+). The enzyme catalyses thiosulfate(out) + ATP + H2O = thiosulfate(in) + ADP + phosphate + H(+). In terms of biological role, part of the ABC transporter complex CysAWTP involved in sulfate/thiosulfate import. Responsible for energy coupling to the transport system. The chain is Sulfate/thiosulfate import ATP-binding protein CysA from Gloeobacter violaceus (strain ATCC 29082 / PCC 7421).